The following is a 709-amino-acid chain: Fatty acid oxidation complex subunit alpha (709 aa).

The tract at residues 1–188 is enoyl-CoA hydratase; the sequence is MEKTFNLTRR…KMGLVNDVVP (188 aa). The segment at 308–709 is 3-hydroxyacyl-CoA dehydrogenase; the sequence is RKVKKAVILG…EMAAEKTRFF (402 aa).

The protein in the N-terminal section; belongs to the enoyl-CoA hydratase/isomerase family. This sequence in the central section; belongs to the 3-hydroxyacyl-CoA dehydrogenase family. As to quaternary structure, heterotetramer of two alpha chains (FadJ) and two beta chains (FadI).

The protein localises to the cytoplasm. The catalysed reaction is a (3S)-3-hydroxyacyl-CoA = a (2E)-enoyl-CoA + H2O. It catalyses the reaction a 4-saturated-(3S)-3-hydroxyacyl-CoA = a (3E)-enoyl-CoA + H2O. The enzyme catalyses a (3S)-3-hydroxyacyl-CoA + NAD(+) = a 3-oxoacyl-CoA + NADH + H(+). It carries out the reaction (3S)-3-hydroxybutanoyl-CoA = (3R)-3-hydroxybutanoyl-CoA. It functions in the pathway lipid metabolism; fatty acid beta-oxidation. Catalyzes the formation of a hydroxyacyl-CoA by addition of water on enoyl-CoA. Also exhibits 3-hydroxyacyl-CoA epimerase and 3-hydroxyacyl-CoA dehydrogenase activities. The chain is Fatty acid oxidation complex subunit alpha from Shewanella sp. (strain MR-4).